Consider the following 204-residue polypeptide: Rho GDP-dissociation inhibitor 1 (204 aa).

The disordered stretch occupies residues Met1–Gln36. Residue Ala2 is modified to N-acetylalanine. Ser34 is subject to Phosphoserine. N6-acetyllysine is present on Lys43. A Phosphoserine modification is found at Ser47. 2 positions are modified to N6-acetyllysine: Lys105 and Lys127. Glycyl lysine isopeptide (Lys-Gly) (interchain with G-Cter in SUMO1); alternate cross-links involve residues Lys138 and Lys141. Glycyl lysine isopeptide (Lys-Gly) (interchain with G-Cter in SUMO2); alternate cross-links involve residues Lys138 and Lys141. Lys141 is modified (N6-acetyllysine; alternate). Position 141 is an N6-succinyllysine; alternate (Lys141). Position 178 is an N6-acetyllysine (Lys178).

The protein belongs to the Rho GDI family. Monomer. Interacts with FER. Interacts with PLXNB3. Forms a heterodimer with RAC1. Interacts with RHOA, the affinity is increased by three orders of magnitude when RHOA is prenylated. Interacts with PSMD10; the interaction increases ARHGDIA association with RHOA, leading to ARHGDIA-mediated inactivation of RHOA and ROCK and prolonged AKT activation. Interacts with KANK2; the interaction is direct and may regulate the interaction of ARHGDIA with RHOA, RAC1 and CDC42. Interacts with RHOC. Interacts with CDC42. Interacts with NGFR (via death domain); NGFR binding decreases the affinity for RHOA. In terms of tissue distribution, in kidney glomerulus, expressed in podocytes and mesangial cells.

The protein localises to the cytoplasm. Its function is as follows. Controls Rho proteins homeostasis. Regulates the GDP/GTP exchange reaction of the Rho proteins by inhibiting the dissociation of GDP from them, and the subsequent binding of GTP to them. Retains Rho proteins such as CDC42, RAC1 and RHOA in an inactive cytosolic pool, regulating their stability and protecting them from degradation. Actively involved in the recycling and distribution of activated Rho GTPases in the cell, mediates extraction from membranes of both inactive and activated molecules due its exceptionally high affinity for prenylated forms. Through the modulation of Rho proteins, may play a role in cell motility regulation. In glioma cells, inhibits cell migration and invasion by mediating the signals of SEMA5A and PLXNB3 that lead to inactivation of RAC1. The sequence is that of Rho GDP-dissociation inhibitor 1 (Arhgdia) from Mus musculus (Mouse).